The sequence spans 182 residues: Adenylate kinase (182 aa).

12-17 (GAGKGT) serves as a coordination point for ATP. The tract at residues 32 to 61 (STGELLRKEIEMNTALGIQVKDIMNRGELV) is NMP. Residues threonine 33, arginine 38, 59–61 (ELV), 85–88 (GYPR), and glutamine 92 each bind AMP. Positions 126–132 (LRGRKDD) are LID. Arginine 127 serves as a coordination point for ATP. Residues arginine 129 and arginine 140 each contribute to the AMP site. Arginine 168 contributes to the ATP binding site.

This sequence belongs to the adenylate kinase family. Monomer.

It localises to the cytoplasm. It carries out the reaction AMP + ATP = 2 ADP. It functions in the pathway purine metabolism; AMP biosynthesis via salvage pathway; AMP from ADP: step 1/1. In terms of biological role, catalyzes the reversible transfer of the terminal phosphate group between ATP and AMP. Plays an important role in cellular energy homeostasis and in adenine nucleotide metabolism. This is Adenylate kinase from Prochlorococcus marinus (strain MIT 9301).